A 235-amino-acid polypeptide reads, in one-letter code: Uridylate kinase (235 aa).

9–12 (KLSG) contacts ATP. Gly-51 contributes to the UMP binding site. ATP is bound by residues Gly-52 and Arg-56. UMP is bound by residues Asp-71 and 133–140 (SGNPFFTT). ATP-binding residues include Thr-160, Tyr-166, and Asp-169.

Belongs to the UMP kinase family. Homohexamer.

The protein resides in the cytoplasm. It carries out the reaction UMP + ATP = UDP + ADP. It functions in the pathway pyrimidine metabolism; CTP biosynthesis via de novo pathway; UDP from UMP (UMPK route): step 1/1. With respect to regulation, inhibited by UTP. Functionally, catalyzes the reversible phosphorylation of UMP to UDP. This chain is Uridylate kinase, found in Gloeobacter violaceus (strain ATCC 29082 / PCC 7421).